Consider the following 331-residue polypeptide: Adenosine deaminase (331 aa).

H12 and H14 together coordinate Zn(2+). Positions 14, 16, and 170 each coordinate substrate. Position 197 (H197) interacts with Zn(2+). The active-site Proton donor is the E200. Residue D278 participates in Zn(2+) binding.

The protein belongs to the metallo-dependent hydrolases superfamily. Adenosine and AMP deaminases family. Adenosine deaminase subfamily. Zn(2+) is required as a cofactor.

The catalysed reaction is adenosine + H2O + H(+) = inosine + NH4(+). The enzyme catalyses 2'-deoxyadenosine + H2O + H(+) = 2'-deoxyinosine + NH4(+). Its function is as follows. Catalyzes the hydrolytic deamination of adenosine and 2-deoxyadenosine. The sequence is that of Adenosine deaminase from Vibrio vulnificus (strain CMCP6).